A 341-amino-acid polypeptide reads, in one-letter code: L-threonine 3-dehydrogenase (341 aa).

C38 is a Zn(2+) binding site. Residues T40 and H43 each act as charge relay system in the active site. Zn(2+) is bound by residues H63, E64, C93, C96, C99, and C107. Residues I175, D195, R200, 262-264 (LGI), and 286-287 (IY) contribute to the NAD(+) site.

This sequence belongs to the zinc-containing alcohol dehydrogenase family. In terms of assembly, homotetramer. Zn(2+) is required as a cofactor.

It is found in the cytoplasm. It carries out the reaction L-threonine + NAD(+) = (2S)-2-amino-3-oxobutanoate + NADH + H(+). The protein operates within amino-acid degradation; L-threonine degradation via oxydo-reductase pathway; glycine from L-threonine: step 1/2. Functionally, catalyzes the NAD(+)-dependent oxidation of L-threonine to 2-amino-3-ketobutyrate. The chain is L-threonine 3-dehydrogenase from Chromobacterium violaceum (strain ATCC 12472 / DSM 30191 / JCM 1249 / CCUG 213 / NBRC 12614 / NCIMB 9131 / NCTC 9757 / MK).